The chain runs to 393 residues: Digeranylgeranylglycerophospholipid reductase (393 aa).

Positions 13, 32, 43, 44, 46, 95, 119, 274, and 286 each coordinate FAD. A 2,3-bis-O-(geranylgeranyl)-sn-glycerol 1-phospholipid contacts are provided by lysine 327 and glycine 363.

Belongs to the geranylgeranyl reductase family. DGGGPL reductase subfamily. FAD serves as cofactor.

It carries out the reaction a 2,3-bis-O-phytanyl-sn-glycerol 1-phospholipid + 8 A = a 2,3-bis-O-(geranylgeranyl)-sn-glycerol 1-phospholipid + 8 AH2. It catalyses the reaction 2,3-bis-O-(phytanyl)-sn-glycerol 1-phosphate + 8 A = 2,3-bis-O-(geranylgeranyl)-sn-glycerol 1-phosphate + 8 AH2. The catalysed reaction is CDP-2,3-bis-O-(geranylgeranyl)-sn-glycerol + 8 AH2 = CDP-2,3-bis-O-(phytanyl)-sn-glycerol + 8 A. The enzyme catalyses archaetidylserine + 8 AH2 = 2,3-bis-O-phytanyl-sn-glycero-3-phospho-L-serine + 8 A. Its pathway is membrane lipid metabolism; glycerophospholipid metabolism. In terms of biological role, is involved in the reduction of 2,3-digeranylgeranylglycerophospholipids (unsaturated archaeols) into 2,3-diphytanylglycerophospholipids (saturated archaeols) in the biosynthesis of archaeal membrane lipids. Catalyzes the formation of archaetidic acid (2,3-di-O-phytanyl-sn-glyceryl phosphate) from 2,3-di-O-geranylgeranylglyceryl phosphate (DGGGP) via the hydrogenation of each double bond of the isoprenoid chains. Is also probably able to reduce double bonds of geranyl groups in CDP-2,3-bis-O-(geranylgeranyl)-sn-glycerol and archaetidylserine, thus acting at various stages in the biosynthesis of archaeal membrane lipids. In Pyrococcus furiosus (strain ATCC 43587 / DSM 3638 / JCM 8422 / Vc1), this protein is Digeranylgeranylglycerophospholipid reductase.